A 207-amino-acid polypeptide reads, in one-letter code: Glycerol-3-phosphate acyltransferase (207 aa).

5 helical membrane passes run 2-22 (ILVL…GVVI), 47-67 (MLGP…GTLA), 72-92 (ILFG…AVFG), 121-141 (FFVI…MVSV), and 155-175 (LVYH…VFLI).

The protein belongs to the PlsY family. In terms of assembly, probably interacts with PlsX.

It is found in the cell membrane. The enzyme catalyses an acyl phosphate + sn-glycerol 3-phosphate = a 1-acyl-sn-glycero-3-phosphate + phosphate. The protein operates within lipid metabolism; phospholipid metabolism. Functionally, catalyzes the transfer of an acyl group from acyl-phosphate (acyl-PO(4)) to glycerol-3-phosphate (G3P) to form lysophosphatidic acid (LPA). This enzyme utilizes acyl-phosphate as fatty acyl donor, but not acyl-CoA or acyl-ACP. This Lacticaseibacillus casei (strain BL23) (Lactobacillus casei) protein is Glycerol-3-phosphate acyltransferase.